The primary structure comprises 216 residues: Imidazole glycerol phosphate synthase subunit HisH (216 aa).

The Glutamine amidotransferase type-1 domain occupies 2 to 216 (RVAIIDYGSG…LISNFLRWKP (215 aa)). The Nucleophile role is filled by C88. Active-site residues include H196 and E198.

In terms of assembly, heterodimer of HisH and HisF.

The protein localises to the cytoplasm. It carries out the reaction 5-[(5-phospho-1-deoxy-D-ribulos-1-ylimino)methylamino]-1-(5-phospho-beta-D-ribosyl)imidazole-4-carboxamide + L-glutamine = D-erythro-1-(imidazol-4-yl)glycerol 3-phosphate + 5-amino-1-(5-phospho-beta-D-ribosyl)imidazole-4-carboxamide + L-glutamate + H(+). The catalysed reaction is L-glutamine + H2O = L-glutamate + NH4(+). Its pathway is amino-acid biosynthesis; L-histidine biosynthesis; L-histidine from 5-phospho-alpha-D-ribose 1-diphosphate: step 5/9. IGPS catalyzes the conversion of PRFAR and glutamine to IGP, AICAR and glutamate. The HisH subunit catalyzes the hydrolysis of glutamine to glutamate and ammonia as part of the synthesis of IGP and AICAR. The resulting ammonia molecule is channeled to the active site of HisF. This Agrobacterium fabrum (strain C58 / ATCC 33970) (Agrobacterium tumefaciens (strain C58)) protein is Imidazole glycerol phosphate synthase subunit HisH.